Consider the following 597-residue polypeptide: Serine/arginine repetitive matrix protein 3 (597 aa).

Over residues methionine 1–threonine 31 the composition is skewed to polar residues. The disordered stretch occupies residues methionine 1 to valine 47. The CWF21 domain occupies leucine 55–lysine 98. The span at glutamate 99–glycine 109 shows a compositional bias: basic and acidic residues. A disordered region spans residues glutamate 99–alanine 597. 4 stretches are compositionally biased toward basic residues: residues arginine 149–histidine 158, proline 168–arginine 186, leucine 199–arginine 211, and arginine 219–proline 243. Composition is skewed to low complexity over residues serine 257–leucine 278 and serine 291–arginine 313. Composition is skewed to gly residues over residues glycine 315 to proline 328 and glycine 374 to alanine 383. Positions glycine 384–arginine 412 are enriched in basic residues. Composition is skewed to low complexity over residues arginine 417–glycine 433, arginine 466–alanine 476, and serine 488–lysine 507. Basic and acidic residues predominate over residues leucine 530–arginine 549. The span at alanine 550 to arginine 565 shows a compositional bias: basic residues.

This sequence belongs to the CWC21 family. Expressed in breast cancer cell lines.

In terms of biological role, may play a role in regulating breast cancer cell invasiveness. May be involved in RYBP-mediated breast cancer progression. The chain is Serine/arginine repetitive matrix protein 3 (SRRM3) from Homo sapiens (Human).